The primary structure comprises 381 residues: Queuine tRNA-ribosyltransferase (381 aa).

Residue aspartate 89 is the Proton acceptor of the active site. Residues 89–93 (DSGGF), aspartate 143, glutamine 187, and glycine 214 each bind substrate. The interval 245-251 (GVGKPED) is RNA binding. Aspartate 264 serves as the catalytic Nucleophile. Positions 269 to 273 (TRNAR) are RNA binding; important for wobble base 34 recognition. Zn(2+)-binding residues include cysteine 302, cysteine 304, cysteine 307, and histidine 333.

This sequence belongs to the queuine tRNA-ribosyltransferase family. As to quaternary structure, homodimer. Within each dimer, one monomer is responsible for RNA recognition and catalysis, while the other monomer binds to the replacement base PreQ1. The cofactor is Zn(2+).

The catalysed reaction is 7-aminomethyl-7-carbaguanine + guanosine(34) in tRNA = 7-aminomethyl-7-carbaguanosine(34) in tRNA + guanine. Its pathway is tRNA modification; tRNA-queuosine biosynthesis. Catalyzes the base-exchange of a guanine (G) residue with the queuine precursor 7-aminomethyl-7-deazaguanine (PreQ1) at position 34 (anticodon wobble position) in tRNAs with GU(N) anticodons (tRNA-Asp, -Asn, -His and -Tyr). Catalysis occurs through a double-displacement mechanism. The nucleophile active site attacks the C1' of nucleotide 34 to detach the guanine base from the RNA, forming a covalent enzyme-RNA intermediate. The proton acceptor active site deprotonates the incoming PreQ1, allowing a nucleophilic attack on the C1' of the ribose to form the product. After dissociation, two additional enzymatic reactions on the tRNA convert PreQ1 to queuine (Q), resulting in the hypermodified nucleoside queuosine (7-(((4,5-cis-dihydroxy-2-cyclopenten-1-yl)amino)methyl)-7-deazaguanosine). This chain is Queuine tRNA-ribosyltransferase, found in Pectobacterium carotovorum subsp. carotovorum (strain PC1).